The sequence spans 270 residues: uncharacterized protein (270 aa).

The HTH lysR-type domain occupies 1–50 (LTEVVKAQSFTKAAENLYTSQPSISRDIKRLENDYDVKVFEFKHSKMTLT). Positions 10–29 (FTKAAENLYTSQPSISRDIK) form a DNA-binding region, H-T-H motif.

Belongs to the LysR transcriptional regulatory family.

This is an uncharacterized protein from Staphylococcus xylosus.